The chain runs to 146 residues: D-aminoacyl-tRNA deacylase (146 aa).

Positions Gly-138–Pro-139 match the Gly-cisPro motif, important for rejection of L-amino acids motif.

The protein belongs to the DTD family. Homodimer.

It is found in the cytoplasm. It catalyses the reaction glycyl-tRNA(Ala) + H2O = tRNA(Ala) + glycine + H(+). It carries out the reaction a D-aminoacyl-tRNA + H2O = a tRNA + a D-alpha-amino acid + H(+). Functionally, an aminoacyl-tRNA editing enzyme that deacylates mischarged D-aminoacyl-tRNAs. Also deacylates mischarged glycyl-tRNA(Ala), protecting cells against glycine mischarging by AlaRS. Acts via tRNA-based rather than protein-based catalysis; rejects L-amino acids rather than detecting D-amino acids in the active site. By recycling D-aminoacyl-tRNA to D-amino acids and free tRNA molecules, this enzyme counteracts the toxicity associated with the formation of D-aminoacyl-tRNA entities in vivo and helps enforce protein L-homochirality. In Stenotrophomonas maltophilia (strain K279a), this protein is D-aminoacyl-tRNA deacylase.